The chain runs to 336 residues: Aspartate--ammonia ligase (336 aa).

The protein belongs to the class-II aminoacyl-tRNA synthetase family. AsnA subfamily.

The protein resides in the cytoplasm. The enzyme catalyses L-aspartate + NH4(+) + ATP = L-asparagine + AMP + diphosphate + H(+). Its pathway is amino-acid biosynthesis; L-asparagine biosynthesis; L-asparagine from L-aspartate (ammonia route): step 1/1. The chain is Aspartate--ammonia ligase from Ruminiclostridium cellulolyticum (strain ATCC 35319 / DSM 5812 / JCM 6584 / H10) (Clostridium cellulolyticum).